Consider the following 216-residue polypeptide: Guanylate kinase (216 aa).

Positions 11-189 constitute a Guanylate kinase-like domain; sequence GVLIVISGPS…AVKKIEAILL (179 aa). ATP is bound at residue 18 to 25; sequence GPSGAGKG.

The protein belongs to the guanylate kinase family.

The protein resides in the cytoplasm. It carries out the reaction GMP + ATP = GDP + ADP. In terms of biological role, essential for recycling GMP and indirectly, cGMP. The polypeptide is Guanylate kinase (Clostridium perfringens (strain ATCC 13124 / DSM 756 / JCM 1290 / NCIMB 6125 / NCTC 8237 / Type A)).